A 344-amino-acid chain; its full sequence is N-acetyl-gamma-glutamyl-phosphate reductase (344 aa).

Residue cysteine 150 is part of the active site.

It belongs to the NAGSA dehydrogenase family. Type 1 subfamily.

The protein resides in the cytoplasm. It carries out the reaction N-acetyl-L-glutamate 5-semialdehyde + phosphate + NADP(+) = N-acetyl-L-glutamyl 5-phosphate + NADPH + H(+). It participates in amino-acid biosynthesis; L-arginine biosynthesis; N(2)-acetyl-L-ornithine from L-glutamate: step 3/4. Its function is as follows. Catalyzes the NADPH-dependent reduction of N-acetyl-5-glutamyl phosphate to yield N-acetyl-L-glutamate 5-semialdehyde. This Pseudomonas fluorescens (strain SBW25) protein is N-acetyl-gamma-glutamyl-phosphate reductase.